We begin with the raw amino-acid sequence, 887 residues long: Putative RNA-binding protein 15B (887 aa).

Positions 1–132 (MKRQSERDSS…EPAGPGSTAA (132 aa)) are disordered. Residues 10–20 (SPSGRGSSSSA) show a composition bias toward low complexity. 2 stretches are compositionally biased toward basic and acidic residues: residues 22–34 (RPRE…EAGG) and 65–77 (GHRD…DANH). Over residues 83 to 94 (RSSGAPGGGGRT) the composition is skewed to gly residues. The segment covering 95–110 (GKASGDPGAGGASPRA) has biased composition (low complexity). Residues S107 and S111 each carry the phosphoserine modification. A compositionally biased stretch (pro residues) spans 111 to 122 (SPLPPPPPPPGA). A compositionally biased stretch (low complexity) spans 123-132 (EPAGPGSTAA). The RRM 1 domain occupies 136-216 (KTLLISSLSP…RPLKVEPVYL (81 aa)). A Glycyl lysine isopeptide (Lys-Gly) (interchain with G-Cter in SUMO2) cross-link involves residue K210. Positions 215-249 (YLRGGGSSRRSSSSSAAASTPPPGPPAPADPLGYL) are disordered. Over residues 222–233 (SRRSSSSSAAAS) the composition is skewed to low complexity. Residues 234–243 (TPPPGPPAPA) show a composition bias toward pro residues. 2 positions are modified to phosphoserine: S261 and S263. RRM domains lie at 333–410 (RNLF…YGKA) and 414–488 (TRLW…FAKA). Residue T529 is modified to Phosphothreonine. S549, S553, and S559 each carry phosphoserine. A disordered region spans residues 549 to 703 (SLSKSSDRRN…TLEEPKHETK (155 aa)). Composition is skewed to basic and acidic residues over residues 570-613 (RSGE…ERSR), 623-643 (RGSD…EGTK), and 668-700 (EAPD…EPKH). A Nuclear localization signal motif is present at residues 590-594 (RRKRR). A Glycyl lysine isopeptide (Lys-Gly) (interchain with G-Cter in SUMO2) cross-link involves residue K699. The SPOC domain occupies 708–886 (LSEYAQTLQL…HMVIVIVRDT (179 aa)). The interval 719-887 (WNGLLVLKNS…MVIVIVRDTA (169 aa)) is interaction with Epstein-Barr virus BMLF1.

This sequence belongs to the RRM Spen family. In terms of assembly, component of the WMM complex, a N6-methyltransferase complex composed of a catalytic subcomplex, named MAC, and of an associated subcomplex, named MACOM. The MAC subcomplex is composed of METTL3 and METTL14. The MACOM subcomplex is composed of WTAP, ZC3H13, CBLL1/HAKAI, VIRMA, and, in some cases of RBM15 (RBM15 or RBM15B). May interact with NCOR2. Interacts with NXF1, the interaction is required to promote mRNA export.

The protein resides in the nucleus. It is found in the nucleoplasm. Its subcellular location is the nucleus speckle. It localises to the nucleus envelope. Its function is as follows. RNA-binding protein that acts as a key regulator of N6-methyladenosine (m6A) methylation of RNAs, thereby regulating different processes, such as alternative splicing of mRNAs and X chromosome inactivation mediated by Xist RNA. Associated component of the WMM complex, a complex that mediates N6-methyladenosine (m6A) methylation of RNAs, a modification that plays a role in the efficiency of mRNA splicing and RNA processing. Plays a key role in m6A methylation, possibly by binding target RNAs and recruiting the WMM complex. Involved in random X inactivation mediated by Xist RNA: acts by binding Xist RNA and recruiting the WMM complex, which mediates m6A methylation, leading to target YTHDC1 reader on Xist RNA and promoting transcription repression activity of Xist. Functions in the regulation of alternative or illicit splicing, possibly by regulating m6A methylation. Inhibits pre-mRNA splicing. Also functions as a mRNA export factor by acting as a cofactor for the nuclear export receptor NXF1. This chain is Putative RNA-binding protein 15B (Rbm15b), found in Mus musculus (Mouse).